The sequence spans 71 residues: Small ribosomal subunit protein bS21 (71 aa).

Over residues 48–60 (KKAAAVKRYKKKL) the composition is skewed to basic residues. Residues 48–71 (KKAAAVKRYKKKLQRESIRTTRMY) form a disordered region. The span at 61-71 (QRESIRTTRMY) shows a compositional bias: basic and acidic residues.

The protein belongs to the bacterial ribosomal protein bS21 family.

The polypeptide is Small ribosomal subunit protein bS21 (Psychrobacter sp. (strain PRwf-1)).